Here is a 222-residue protein sequence, read N- to C-terminus: Urease accessory protein UreF (222 aa).

It belongs to the UreF family. In terms of assembly, ureD, UreF and UreG form a complex that acts as a GTP-hydrolysis-dependent molecular chaperone, activating the urease apoprotein by helping to assemble the nickel containing metallocenter of UreC. The UreE protein probably delivers the nickel.

It is found in the cytoplasm. Functionally, required for maturation of urease via the functional incorporation of the urease nickel metallocenter. The sequence is that of Urease accessory protein UreF from Hahella chejuensis (strain KCTC 2396).